Here is a 60-residue protein sequence, read N- to C-terminus: Large ribosomal subunit protein uL30 (60 aa).

This sequence belongs to the universal ribosomal protein uL30 family. In terms of assembly, part of the 50S ribosomal subunit.

This is Large ribosomal subunit protein uL30 from Streptococcus pneumoniae (strain Hungary19A-6).